We begin with the raw amino-acid sequence, 252 residues long: Large ribosomal subunit protein uL4 (252 aa).

The protein belongs to the universal ribosomal protein uL4 family. Part of the 50S ribosomal subunit.

Functionally, one of the primary rRNA binding proteins, this protein initially binds near the 5'-end of the 23S rRNA. It is important during the early stages of 50S assembly. It makes multiple contacts with different domains of the 23S rRNA in the assembled 50S subunit and ribosome. In terms of biological role, forms part of the polypeptide exit tunnel. The sequence is that of Large ribosomal subunit protein uL4 from Methanococcus maripaludis (strain DSM 14266 / JCM 13030 / NBRC 101832 / S2 / LL).